The chain runs to 712 residues: MSSSNQNLAIAANAIDITAPESTIPNKSKVPNKSAESSQSTVPKAPSRREIRAQAQAFIDTLAPLQHTNSQKVYLEGSSADIRVGMRQILQTDTLVGGTDDAPIMEKNPPIRVYDCAGPYSDPEADINVRLGLVKLRQNWILARKDTEQLPCATSDFTQQRLADDGLDHLRFEAGSSAIVRPRRALQGKRVSQLHYARQGIITPEMEYVAIRENMALAEVQDEILNRKAKGEAFGALVGEPITAEFVRAEVARGRAIIPLNINHPEAEPMIIGRNFLVKVNANIGNSAVTSSIEEEVEKLVWSTRWGADTVMDLSTGRYIHETREWIIRNSPVPIGTVPIYQALEKVNGVAEDLTWEVFRDTLIEQAEQGVDYFTIHAGVLLRYVPMTAKRVTGIVSRGGSIMAKWCLSHHKENFLYSHFREICELCVAYDVSLSLGDGMRPGSIADANDAAQFAELETLGELVKIAWEYDVQTIIEGPGHIPMQLIKENMDKQLAHCGEAPFYTLGPQITDIAPGYDHFTSGIGAAMIAWYGCAMLCYVTPKEHLGLPNKQDVKQGLIAYKIAAHAADVAKGHPSAQIRDNALAKARFEFRWEDQYNLGLDPETARAYHDESLPQESAKVAHFCSMCGPKFCSMKITQDVRAYAAGLEAAQTKAEQVEAAAQAMQVTIKTPQELEAAMALKSAQFAASGAEIYQVIDKHVKDKLVAEAEEA.

Residues 14 to 49 are disordered; it reads AIDITAPESTIPNKSKVPNKSAESSQSTVPKAPSRR. The span at 20-42 shows a compositional bias: polar residues; it reads PESTIPNKSKVPNKSAESSQSTV. Substrate contacts are provided by residues asparagine 283, methionine 312, tyrosine 341, histidine 377, 397–399, 438–441, and glutamate 477; these read SRG and DGMR. Histidine 481 contributes to the Zn(2+) binding site. Tyrosine 504 is a binding site for substrate. Residue histidine 545 participates in Zn(2+) binding. Cysteine 625, cysteine 628, and cysteine 633 together coordinate [4Fe-4S] cluster.

Belongs to the ThiC family. Homodimer. Requires [4Fe-4S] cluster as cofactor.

It catalyses the reaction 5-amino-1-(5-phospho-beta-D-ribosyl)imidazole + S-adenosyl-L-methionine = 4-amino-2-methyl-5-(phosphooxymethyl)pyrimidine + CO + 5'-deoxyadenosine + formate + L-methionine + 3 H(+). Its pathway is cofactor biosynthesis; thiamine diphosphate biosynthesis. Functionally, catalyzes the synthesis of the hydroxymethylpyrimidine phosphate (HMP-P) moiety of thiamine from aminoimidazole ribotide (AIR) in a radical S-adenosyl-L-methionine (SAM)-dependent reaction. The sequence is that of Phosphomethylpyrimidine synthase from Shewanella putrefaciens (strain CN-32 / ATCC BAA-453).